A 125-amino-acid chain; its full sequence is Oxytocin-neurophysin 1 (125 aa).

The N-terminal stretch at 1-19 (MAGSSLACCLLGLLALTSA) is a signal peptide. Cys20 and Cys25 are joined by a disulfide. Gly28 carries the post-translational modification Glycine amide. 7 disulfides stabilise this stretch: Cys41–Cys85, Cys44–Cys58, Cys52–Cys75, Cys59–Cys65, Cys92–Cys104, Cys98–Cys116, and Cys105–Cys110.

Belongs to the vasopressin/oxytocin family. In terms of assembly, interacts with oxytocin receptor (Ki=1.5 nM). Interacts with vasopressin V1aR/AVPR1A (Ki=37 nM), V1bR/AVPR1B (Ki=222 nM), and V2R/AVPR2 receptors (Ki=823 nM).

In terms of biological role, neurophysin 1 specifically binds oxytocin. Its function is as follows. Oxytocin causes contraction of the smooth muscle of the uterus and of the mammary gland. Acts by binding to oxytocin receptor (OXTR). This chain is Oxytocin-neurophysin 1 (OXT), found in Ovis aries (Sheep).